Here is a 532-residue protein sequence, read N- to C-terminus: Probable 1,4-beta-D-glucan cellobiohydrolase B (532 aa).

A signal peptide spans 1 to 26; that stretch reads MLASTFSYRMYKTALILAALLGSGQA. A catalytic region spans residues 27 to 461; it reads QQVGTSQAEV…SNIKVGPIGS (435 aa). The Nucleophile role is filled by Glu-238. Glu-243 acts as the Proton donor in catalysis. Residue Asn-296 is glycosylated (N-linked (GlcNAc...) asparagine). The interval 462 to 495 is disordered; the sequence is TFNSGGSNPGGGTTTTTTTQPTTTTTTAGNPGGT. The tract at residues 462–496 is thr-rich linker; sequence TFNSGGSNPGGGTTTTTTTQPTTTTTTAGNPGGTG. A compositionally biased stretch (low complexity) spans 475–490; the sequence is TTTTTTQPTTTTTTAG. In terms of domain architecture, CBM1 spans 496–532; it reads GVAQHYGQCGGIGWTGPTTCASPYTCQKLNDYYSQCL. Cystine bridges form between Cys-504–Cys-521 and Cys-515–Cys-531.

Belongs to the glycosyl hydrolase 7 (cellulase C) family.

The protein localises to the secreted. It catalyses the reaction Hydrolysis of (1-&gt;4)-beta-D-glucosidic linkages in cellulose and cellotetraose, releasing cellobiose from the non-reducing ends of the chains.. Its function is as follows. The biological conversion of cellulose to glucose generally requires three types of hydrolytic enzymes: (1) Endoglucanases which cut internal beta-1,4-glucosidic bonds; (2) Exocellobiohydrolases that cut the disaccharide cellobiose from the non-reducing end of the cellulose polymer chain; (3) Beta-1,4-glucosidases which hydrolyze the cellobiose and other short cello-oligosaccharides to glucose. The protein is Probable 1,4-beta-D-glucan cellobiohydrolase B (cbhB) of Aspergillus fumigatus (strain CBS 144.89 / FGSC A1163 / CEA10) (Neosartorya fumigata).